Consider the following 309-residue polypeptide: Probable manganese-dependent inorganic pyrophosphatase (309 aa).

Mn(2+) is bound by residues H9, D13, D15, D75, H97, and D149.

Belongs to the PPase class C family. The cofactor is Mn(2+).

It is found in the cytoplasm. It catalyses the reaction diphosphate + H2O = 2 phosphate + H(+). This is Probable manganese-dependent inorganic pyrophosphatase from Bacillus cereus (strain ATCC 10987 / NRS 248).